The primary structure comprises 360 residues: NAD(P)H-quinone oxidoreductase subunit 1, chloroplastic (360 aa).

8 consecutive transmembrane segments (helical) span residues 30–50 (FLPIFSLVVGIVTGVLVLVWL), 98–118 (FSIGPSLAVISILLSYSVIPF), 127–147 (FNIGIFLWIAISSIAPIGLLM), 165–185 (AAQSISYEIPLTLCLLSISLL), 203–223 (FWGWNLWRQPIGFIIFLISSL), 253–273 (FGLFYVASYLNLLISSLFVTV), 297–317 (IFGTTIGIFITLAKTYLFLFI), and 340–360 (FLLPISLGNLLLTTSFQVFSL).

This sequence belongs to the complex I subunit 1 family. As to quaternary structure, NDH is composed of at least 16 different subunits, 5 of which are encoded in the nucleus.

The protein resides in the plastid. It localises to the chloroplast thylakoid membrane. The catalysed reaction is a plastoquinone + NADH + (n+1) H(+)(in) = a plastoquinol + NAD(+) + n H(+)(out). It carries out the reaction a plastoquinone + NADPH + (n+1) H(+)(in) = a plastoquinol + NADP(+) + n H(+)(out). NDH shuttles electrons from NAD(P)H:plastoquinone, via FMN and iron-sulfur (Fe-S) centers, to quinones in the photosynthetic chain and possibly in a chloroplast respiratory chain. The immediate electron acceptor for the enzyme in this species is believed to be plastoquinone. Couples the redox reaction to proton translocation, and thus conserves the redox energy in a proton gradient. This is NAD(P)H-quinone oxidoreductase subunit 1, chloroplastic from Aethionema cordifolium (Lebanon stonecress).